Consider the following 571-residue polypeptide: Zinc metalloproteinase-disintegrin-like jararhagin (571 aa).

The propeptide occupies 1-150 (ATRPKGAVQP…KKASQLAFTA (150 aa)). The residue at position 151 (glutamate 151) is a Pyrrolidone carboxylic acid (Glu). In terms of domain architecture, Peptidase M12B spans 159 to 355 (KYIEFFVVVD…HNPECIINEP (197 aa)). Ca(2+) contacts are provided by glutamate 162 and aspartate 246. 3 disulfide bridges follow: cysteine 270–cysteine 350, cysteine 310–cysteine 334, and cysteine 312–cysteine 317. Position 295 (histidine 295) interacts with Zn(2+). Glutamate 296 is an active-site residue. Residues histidine 299 and histidine 305 each contribute to the Zn(2+) site. N-linked (GlcNAc...) asparagine glycosylation occurs at asparagine 333. Residues cysteine 350, asparagine 353, valine 365, asparagine 368, leucine 370, glutamate 372, glutamate 375, and aspartate 378 each contribute to the Ca(2+) site. Positions 363–449 (PPVCGNELLE…ECPADVFHKN (87 aa)) constitute a Disintegrin domain. Intrachain disulfides connect cysteine 366–cysteine 385, cysteine 366–cysteine 395, cysteine 377–cysteine 390, cysteine 377–cysteine 395, cysteine 379–cysteine 385, cysteine 389–cysteine 412, cysteine 403–cysteine 409, cysteine 408–cysteine 434, cysteine 421–cysteine 441, cysteine 428–cysteine 453, cysteine 428–cysteine 460, cysteine 453–cysteine 465, cysteine 460–cysteine 465, cysteine 472–cysteine 487, cysteine 472–cysteine 522, cysteine 487–cysteine 533, cysteine 500–cysteine 510, cysteine 510–cysteine 517, cysteine 517–cysteine 559, cysteine 522–cysteine 533, cysteine 553–cysteine 564, and cysteine 559–cysteine 564. The D/ECD-tripeptide signature appears at 427–429 (ECD). Aspartate 429, proline 430, glutamate 432, aspartate 444, and valine 445 together coordinate Ca(2+).

It belongs to the venom metalloproteinase (M12B) family. P-III subfamily. P-IIIb sub-subfamily. Monomer (Jararhagin and Jararhagin-C) and dimer (Jaracetin). It depends on Zn(2+) as a cofactor. The N-terminus of Jararhagin is blocked. Expressed by the venom gland.

Its subcellular location is the secreted. It catalyses the reaction Cleavage of 10-His-|-Leu-11, 14-Ala-|-Leu-15, 16-Tyr-|-Leu-17 and 24-Phe-|-Phe-25 bonds in insulin B chain.. Inhibited by EDTA, 1,10 phenanthroline and batimastat (a peptidomimetic MMP inhibitor). Snake venom zinc metalloproteinase-disintegrin-like jararhagin: causes hemorrhage. This is the result of the degradation of sub-endothelial matrix proteins leading to the disruption of the blood vessel endothelium, with accompanying disturbances in platelet function. It is able to degrade von Willebrand factor (vWF) and it hydrolyzes the alpha-chain of fibrinogen (FGA) while leaving the beta and gamma chains unaffected. It inhibits collagen-induced platelet aggregation through the binding to alpha-2/beta-1 integrin (ITGA2/ITGB1) (collagen receptor), and it cleaves the beta-1 subunit of the same integrin, inhibiting platelet interaction and ultimately causing impairment of signal transduction. It has inability to be affected by the plasma inhibitor alpha(2)-macroglobulin. In fibroblasts, it functions as a collagen-mimetic substrate and, in endothelial cells, it causes apoptosis and indirectly inhibits cell proliferation by release of angiostatin-like compounds. It induces a strong pro-inflammatory response characterized by intense leukocyte accumulation and release of cytokines at the site of the injection. Although hemorrhage and edema are a response to the direct effect of this toxin, jararhagin-induced inflammation and necrosis are dependent on macrophages and key pro-inflammatory cytokines or their receptors. It also possesses anti-tumorgenic properties. In terms of biological role, the monomeric form inhibits collagen- and ADP-induced platelet aggregation, but has no effect on glycoprotein Ib-IX-dependent (GP1BA/GP5/GP9) platelet agglutination. Locally activates the early events of an acute inflammatory response as leukocyte rolling and pro-inflammatory cytokine release. Functionally, the dimeric form jaracetin may be a dimeric form of jararhagin-C. It binds to von Willebrand factor (VWF) and induces its interaction with GPIbalpha (GP1BA) (via the vWF A1 domain), resulting in platelet aggregation. Also binds the alpha-2 subunit of the alpha-2/beta-1 (ITGA2/ITGB1) integrin. It potently induces platelet aggregation in citrated platelet-rich plasma. This Bothrops jararaca (Jararaca) protein is Zinc metalloproteinase-disintegrin-like jararhagin.